A 276-amino-acid chain; its full sequence is ADP-dependent (S)-NAD(P)H-hydrate dehydratase (276 aa).

Residues 7 to 275 (TEEHVRATLP…DILPRVWKRF (269 aa)) enclose the YjeF C-terminal domain. (6S)-NADPHX is bound by residues A42, G104, and H149. Residues 186–190 (KGNQT) and G215 each bind AMP. Position 216 (D216) interacts with (6S)-NADPHX.

It belongs to the NnrD/CARKD family. As to quaternary structure, homotetramer. Requires Mg(2+) as cofactor.

The enzyme catalyses (6S)-NADHX + ADP = AMP + phosphate + NADH + H(+). It carries out the reaction (6S)-NADPHX + ADP = AMP + phosphate + NADPH + H(+). In terms of biological role, catalyzes the dehydration of the S-form of NAD(P)HX at the expense of ADP, which is converted to AMP. Together with NAD(P)HX epimerase, which catalyzes the epimerization of the S- and R-forms, the enzyme allows the repair of both epimers of NAD(P)HX, a damaged form of NAD(P)H that is a result of enzymatic or heat-dependent hydration. The polypeptide is ADP-dependent (S)-NAD(P)H-hydrate dehydratase (Bacillus subtilis (strain 168)).